Consider the following 329-residue polypeptide: Isoaspartyl peptidase/L-asparaginase (329 aa).

Catalysis depends on Thr-173, which acts as the Nucleophile. Residues 201 to 204 (RVSD) and 222 to 225 (TGVG) each bind substrate.

Belongs to the Ntn-hydrolase family. Heterotetramer of two alpha and two beta chains arranged as a dimer of alpha/beta heterodimers. In terms of processing, cleaved into an alpha and beta chain by autocatalysis; this activates the enzyme. The N-terminal residue of the beta subunit is responsible for the nucleophile hydrolase activity.

The catalysed reaction is Cleavage of a beta-linked Asp residue from the N-terminus of a polypeptide.. Degrades proteins damaged by L-isoaspartyl residue formation (also known as beta-Asp residues). Probably performs the final step in the degradation of the reserve polymer cyanophycin (depolymerizes the building block L-beta-Asp-Arg). Also has L-asparaginase activity. This is Isoaspartyl peptidase/L-asparaginase from Synechocystis sp. (strain ATCC 27184 / PCC 6803 / Kazusa).